A 115-amino-acid chain; its full sequence is NADH-ubiquinone oxidoreductase chain 3 (115 aa).

Transmembrane regions (helical) follow at residues methionine 4 to leucine 24, phenylalanine 55 to leucine 75, and methionine 84 to tyrosine 104.

It belongs to the complex I subunit 3 family. In terms of assembly, core subunit of respiratory chain NADH dehydrogenase (Complex I) which is composed of 45 different subunits. Interacts with TMEM186. Interacts with TMEM242.

The protein resides in the mitochondrion inner membrane. It carries out the reaction a ubiquinone + NADH + 5 H(+)(in) = a ubiquinol + NAD(+) + 4 H(+)(out). Its function is as follows. Core subunit of the mitochondrial membrane respiratory chain NADH dehydrogenase (Complex I) which catalyzes electron transfer from NADH through the respiratory chain, using ubiquinone as an electron acceptor. Essential for the catalytic activity of complex I. The sequence is that of NADH-ubiquinone oxidoreductase chain 3 from Reithrodon auritus (Bunny rat).